A 284-amino-acid polypeptide reads, in one-letter code: Proteasome subunit beta 1 (284 aa).

A propeptide spans 1 to 56 (MASHDSYTGRLPGAFMNPGTSSFTEFLASYNPDLLPGRHMTALAGGMPGNVEAPHA) (removed in mature form; by autocatalysis). The Nucleophile role is filled by T57.

This sequence belongs to the peptidase T1B family. In terms of assembly, the 20S proteasome core is composed of 14 alpha and 14 beta subunits that assemble into four stacked heptameric rings, resulting in a barrel-shaped structure. The two inner rings, each composed of seven catalytic beta subunits, are sandwiched by two outer rings, each composed of seven alpha subunits. The catalytic chamber with the active sites is on the inside of the barrel. Has a gated structure, the ends of the cylinder being occluded by the N-termini of the alpha-subunits. Is capped by the proteasome-associated ATPase, ARC.

The protein resides in the cytoplasm. The catalysed reaction is Cleavage of peptide bonds with very broad specificity.. The protein operates within protein degradation; proteasomal Pup-dependent pathway. Its activity is regulated as follows. The formation of the proteasomal ATPase ARC-20S proteasome complex, likely via the docking of the C-termini of ARC into the intersubunit pockets in the alpha-rings, may trigger opening of the gate for substrate entry. Interconversion between the open-gate and close-gate conformations leads to a dynamic regulation of the 20S proteasome proteolysis activity. Component of the proteasome core, a large protease complex with broad specificity involved in protein degradation. The protein is Proteasome subunit beta 1 of Thermomonospora curvata (strain ATCC 19995 / DSM 43183 / JCM 3096 / KCTC 9072 / NBRC 15933 / NCIMB 10081 / Henssen B9).